The following is a 163-amino-acid chain: R-phycoerythrin alpha chain (163 aa).

2 residues coordinate (2R,3E)-phycoerythrobilin: C82 and C139.

It belongs to the phycobiliprotein family. Heterodimer of an alpha and a beta chain. Contains two covalently linked bilin chromophores.

Its subcellular location is the plastid. It localises to the chloroplast thylakoid membrane. Its function is as follows. Light-harvesting photosynthetic bile pigment-protein from the phycobiliprotein complex. In Aglaothamnion neglectum (Red alga), this protein is R-phycoerythrin alpha chain (cpeA).